Reading from the N-terminus, the 333-residue chain is Ribosomal protein L11 methyltransferase (333 aa).

Residues Thr-160, Gly-181, Asp-203, and Asn-267 each contribute to the S-adenosyl-L-methionine site.

The protein belongs to the methyltransferase superfamily. PrmA family.

It localises to the cytoplasm. The catalysed reaction is L-lysyl-[protein] + 3 S-adenosyl-L-methionine = N(6),N(6),N(6)-trimethyl-L-lysyl-[protein] + 3 S-adenosyl-L-homocysteine + 3 H(+). Its function is as follows. Methylates ribosomal protein L11. This chain is Ribosomal protein L11 methyltransferase, found in Lachnoclostridium phytofermentans (strain ATCC 700394 / DSM 18823 / ISDg) (Clostridium phytofermentans).